Reading from the N-terminus, the 801-residue chain is N,N'-diacetylchitobiose phosphorylase (801 aa).

Residues arginine 333, arginine 343, arginine 349, aspartate 350, tryptophan 490, and aspartate 492 each contribute to the N-acetyl-alpha-D-glucosamine 1-phosphate site. The active-site Proton donor is aspartate 492. N-acetyl-D-glucosamine contacts are provided by aspartate 492, lysine 636, and glutamate 637. Positions 637, 644, 690, 709, and 710 each coordinate N-acetyl-alpha-D-glucosamine 1-phosphate.

The protein belongs to the glycosyl hydrolase 94 family. Homodimer.

It catalyses the reaction N,N'-diacetylchitobiose + phosphate = N-acetyl-alpha-D-glucosamine 1-phosphate + N-acetyl-D-glucosamine. In terms of biological role, catalyzes the reversible phosphorolysis of chitobiose (N,N'-diacetylchitobiose or (GlcNAc)(2)) into N-acetyl-alpha-D-glucosamine 1-phosphate (GlcNAc-1-P) and N-acetyl-D-glucosamine (GlcNAc) with inversion of the anomeric configuration. In the synthetic reaction, is also active on glucose-1-phosphate with 10% activity as compared with that on GlcNAc-1-P. GlcNAc is the best acceptor substrate, but the enzyme can use aryl-beta-glycosides of GlcNAc as the acceptor substrate with 10-20% activities of GlcNAc. Shows no phosphorolytic activity on cellobiose. The polypeptide is N,N'-diacetylchitobiose phosphorylase (Vibrio proteolyticus (Aeromonas proteolytica)).